Here is a 510-residue protein sequence, read N- to C-terminus: NAD(P)H-quinone oxidoreductase subunit 2, chloroplastic (510 aa).

The next 13 membrane-spanning stretches (helical) occupy residues 24–44 (LLLFHGSFIFPECILIFGLIL), 59–79 (WFYFISSTSLVMSITALLFRW), 99–119 (IFQFLILLCSTLCIPLSVEYI), 124–144 (MAITEFLLFVLTATLGGMFLC), 149–169 (LITIFVAPECFSLCSYLLSGY), 183–203 (YLLMGGASSSILVHGFSWLYG), 229–249 (ISIALISITVGIGFKLSPAPF), 295–315 (WHLLLEILAILSMILGNLIAI), 323–343 (MLAYSSIGQIGYVIIGIIVGD), 354–374 (YMLFYISMNLGTFACIVSFGL), 395–415 (ALSLALCLLSLGGLPPLAGFF), 418–438 (LYLFWCGWQAGLYFLVSMGLL), and 484–504 (MTVCVIASTIPGISMNPILAI).

The protein belongs to the complex I subunit 2 family. As to quaternary structure, NDH is composed of at least 16 different subunits, 5 of which are encoded in the nucleus.

The protein resides in the plastid. It is found in the chloroplast thylakoid membrane. The catalysed reaction is a plastoquinone + NADH + (n+1) H(+)(in) = a plastoquinol + NAD(+) + n H(+)(out). The enzyme catalyses a plastoquinone + NADPH + (n+1) H(+)(in) = a plastoquinol + NADP(+) + n H(+)(out). In terms of biological role, NDH shuttles electrons from NAD(P)H:plastoquinone, via FMN and iron-sulfur (Fe-S) centers, to quinones in the photosynthetic chain and possibly in a chloroplast respiratory chain. The immediate electron acceptor for the enzyme in this species is believed to be plastoquinone. Couples the redox reaction to proton translocation, and thus conserves the redox energy in a proton gradient. This Sisyrinchium montanum (Strict blue-eyed grass) protein is NAD(P)H-quinone oxidoreductase subunit 2, chloroplastic.